The primary structure comprises 335 residues: Homeobox protein Hox-A1 (335 aa).

Positions Ile-61 to Tyr-80 are disordered. Over residues Pro-64–Pro-75 the composition is skewed to basic residues. The interval Pro-75–Gln-203 is interaction with OGT. The short motif at Thr-204–Lys-209 is the Antp-type hexapeptide element. Residues Pro-229–Glu-288 constitute a DNA-binding region (homeobox). The interval Arg-281–His-335 is disordered. A compositionally biased stretch (basic and acidic residues) spans Asn-303–Glu-312. The segment covering Lys-313–Ser-328 has biased composition (low complexity).

The protein belongs to the Antp homeobox family. Labial subfamily. Interacts with OGT (via TPR repeats domain); the interaction takes place mainly in the nucleus. Forms a DNA-binding heterodimer with transcription factor PBX1.

It is found in the nucleus. Sequence-specific transcription factor. Regulates multiple developmental processes including brainstem, inner and outer ear, abducens nerve and cardiovascular development and morphogenesis as well as cognition and behavior. Also part of a developmental regulatory system that provides cells with specific positional identities on the anterior-posterior axis. Acts on the anterior body structures. Seems to act in the maintenance and/or generation of hindbrain segments. Activates transcription in the presence of PBX1A and PKNOX1. This is Homeobox protein Hox-A1 (HOXA1) from Homo sapiens (Human).